Consider the following 249-residue polypeptide: Putative TrmH family tRNA/rRNA methyltransferase (249 aa).

S-adenosyl-L-methionine is bound by residues Gly196, Ile216, and Leu225.

It belongs to the class IV-like SAM-binding methyltransferase superfamily. RNA methyltransferase TrmH family.

The protein is Putative TrmH family tRNA/rRNA methyltransferase of Staphylococcus haemolyticus (strain JCSC1435).